Here is a 290-residue protein sequence, read N- to C-terminus: 2-dehydro-3-deoxy-phosphogluconate/2-dehydro-3-deoxy-6-phosphogalactonate aldolase (290 aa).

Residues 42-43 (TT), 129-131 (YNY), and 155-157 (KDT) each bind substrate. The active-site Schiff-base intermediate with substrate is the Lys155.

The protein belongs to the DapA family. KDPG aldolase subfamily. Homotetramer; dimer of dimers.

The enzyme catalyses 2-dehydro-3-deoxy-6-phospho-D-gluconate = D-glyceraldehyde 3-phosphate + pyruvate. It catalyses the reaction 2-dehydro-3-deoxy-6-phospho-D-galactonate = D-glyceraldehyde 3-phosphate + pyruvate. The protein operates within carbohydrate acid metabolism; 2-dehydro-3-deoxy-D-gluconate degradation; D-glyceraldehyde 3-phosphate and pyruvate from 2-dehydro-3-deoxy-D-gluconate: step 2/2. In terms of biological role, involved in the degradation of glucose and galactose via the Entner-Doudoroff pathway. Catalyzes the reversible cleavage of 2-keto-3-deoxy-6-phosphogluconate (KDPG) and 2-keto-3-deoxygluconate (KDG) forming pyruvate and glyceraldehyde 3-phosphate or glyceraldehyde, respectively. It is also able to catalyze the reversible cleavage of 2-keto-3-deoxy-6-phosphogalactonate (KDPGal) and 2-keto-3-deoxygalactonate (KDGal). This chain is 2-dehydro-3-deoxy-phosphogluconate/2-dehydro-3-deoxy-6-phosphogalactonate aldolase (kdgA), found in Sulfurisphaera tokodaii (strain DSM 16993 / JCM 10545 / NBRC 100140 / 7) (Sulfolobus tokodaii).